Reading from the N-terminus, the 97-residue chain is Mapk-regulated corepressor-interacting protein 1 (97 aa).

The segment at 1–30 (MTSSPVSRVVYNGKRNSSHRSPPNSSEIFT) is disordered. S21 is subject to Phosphoserine. T30 carries the phosphothreonine modification. Y41 is modified (phosphotyrosine). Positions 77–97 (TFRPIDLSDLKRRNTQDAKKS) are disordered. The short motif at 80–84 (PIDLS) is the PXDLS motif element. Basic and acidic residues predominate over residues 82 to 97 (DLSDLKRRNTQDAKKS).

The protein belongs to the MCRIP family. As to quaternary structure, interacts (unphosphorylated form, via the PXDLS motif) with CTBP1, competitively inhibiting CTBP-ZEB1 interaction. Interacts with CTBP2. Interacts with MCRIP2. Interacts with DDX6. In terms of processing, phosphorylation by MAPK3/1 (ERK1/2) regulates MCRIP1 binding to CTBP(s).

The protein resides in the nucleus. Its subcellular location is the cytoplasm. The protein localises to the stress granule. The phosphorylation status of MCRIP1 functions as a molecular switch to regulate epithelial-mesenchymal transition. Unphosphorylated MCRIP1 binds to and inhibits the transcriptional corepressor CTBP(s). When phosphorylated by MAPK/ERK, MCRIP1 releases CTBP(s) resulting in transcriptional silencing of the E-cadherin gene and induction of epithelial-mesenchymal transition. The polypeptide is Mapk-regulated corepressor-interacting protein 1 (MCRIP1) (Bos taurus (Bovine)).